The primary structure comprises 109 residues: Putative double-stranded DNA mimic protein YciU (109 aa).

The protein belongs to the putative dsDNA mimic protein family.

In terms of biological role, may act as a double-stranded DNA (dsDNA) mimic. Probably regulates the activity of a dsDNA-binding protein. In Salmonella arizonae (strain ATCC BAA-731 / CDC346-86 / RSK2980), this protein is Putative double-stranded DNA mimic protein YciU.